The chain runs to 813 residues: Tax1-binding protein 1 homolog (813 aa).

A phosphoserine mark is found at Ser-124, Ser-138, and Ser-225. The stretch at 144 to 627 forms a coiled coil; it reads TTKAGLLELK…LENQAERKME (484 aa). Residues 320 to 420 are oligomerization; sequence EEIGRLQLCL…ELKLNAMKKD (101 aa). Residues 489 to 502 are compositionally biased toward polar residues; that stretch reads DASVNTDPATSAST. The segment at 489–508 is disordered; that stretch reads DASVNTDPATSASTVDVKPS. Phosphoserine is present on residues Ser-617, Ser-633, and Ser-690. The disordered stretch occupies residues 663-738; sequence YASQETRDGA…DPPSQHLRGH (76 aa). 2 UBZ1-type zinc fingers span residues 751–777 and 778–804; these read HKKC…VESH and WKVC…VQTH. Zn(2+) is bound by residues Cys-754, Cys-757, His-773, His-777, Cys-781, Cys-784, His-800, and His-804.

Homooligomer. Interacts with TNFAIP3. Interacts with STARD13. Interacts with MYO6. Interacts with TOM1; the interaction is indirect and is mediated by MYO6, which acts as a bridge between TOM1 and TAX1BP1. Interacts with MAVS; this interaction induces MAVS polyubiquitination. Interacts with TNIP1. Interacts with TRAF6; this interaction mediates deubiquitination of TRAF6 and inhibition of NF-kappa-B activation. Interacts with RIPK1; this interaction negatively regulates RIPK1 ubiquitination. Interacts with NBR1. Interacts with TBK1. Interacts with RB1CC1. Interacts with SQSTM1. Interacts with AZI2.

It localises to the cytoplasm. It is found in the mitochondrion. The protein localises to the preautophagosomal structure. The protein resides in the cytoplasmic vesicle. Its subcellular location is the autophagosome. Ubiquitin-binding adapter that participates in inflammatory, antiviral and innate immune processes as well as selective autophagy regulation. Plays a key role in the negative regulation of NF-kappa-B and IRF3 signalings by acting as an adapter for the ubiquitin-editing enzyme A20/TNFAIP3 to bind and inactivate its substrates. Disrupts the interactions between the E3 ubiquitin ligase TRAF3 and TBK1/IKBKE to attenuate 'Lys63'-linked polyubiquitination of TBK1 and thereby IFN-beta production. Also recruits A20/TNFAIP3 to ubiquitinated signaling proteins TRAF6 and RIPK1, leading to their deubiquitination and disruption of IL-1 and TNF-induced NF-kappa-B signaling pathways. Inhibits virus-induced apoptosis by inducing the 'Lys-48'-linked polyubiquitination and degradation of MAVS via recruitment of the E3 ligase ITCH, thereby attenuating MAVS-mediated apoptosis signaling. As a macroautophagy/autophagy receptor, facilitates the xenophagic clearance of pathogenic bacteria such as Salmonella typhimurium and Mycobacterium tuberculosis. Upon NBR1 recruitment to the SQSTM1-ubiquitin condensates, acts as the major recruiter of RB1CC1 to these ubiquitin condensates to promote their autophagic degradation. In Pongo abelii (Sumatran orangutan), this protein is Tax1-binding protein 1 homolog (TAX1BP1).